The primary structure comprises 373 residues: LIM domain-binding protein 1 (373 aa).

Disordered stretches follow at residues 248-297 (PPAE…LSSQ) and 329-373 (DAAN…QASQ). The span at 266–282 (SGGSTMSSGGGNTNNSN) shows a compositional bias: low complexity. Polar residues predominate over residues 288-297 (PASTFALSSQ). The LIM interaction domain (LID) domain occupies 298–337 (DVMVVGEPTLMGGEFGDEDERLITRLENTQFDAANGIDDE).

It belongs to the LDB family. In terms of assembly, forms homodimers and heterodimers. Interacts with and activates lhx1/lim1. The stoichiometry of lhx1/lim1 and ldb1 is important for their function and an excess of ldb1 can inhibit lhx1/lim1 function. When bound to lhx1/lim1, escapes degradation by rnf12. Interacts with the N-terminal region of rnf12. In terms of processing, undergoes rnf12-mediated ubiquitin-proteasome-dependent degradation.

It localises to the nucleus. Its function is as follows. Binds to the LIM domain of a wide variety of LIM domain-containing transcription factors. Acts as a coactivator together with otx2 to stimulate lhx1/lim1-mediated activation of the gsc promoter in the Spemann organizer. Acts synergistically with lhx1/lim1 and ssbp in axis formation. The protein is LIM domain-binding protein 1 of Xenopus tropicalis (Western clawed frog).